The sequence spans 156 residues: Small ribosomal subunit protein uS7 (156 aa).

The protein belongs to the universal ribosomal protein uS7 family. As to quaternary structure, part of the 30S ribosomal subunit. Contacts proteins S9 and S11.

In terms of biological role, one of the primary rRNA binding proteins, it binds directly to 16S rRNA where it nucleates assembly of the head domain of the 30S subunit. Is located at the subunit interface close to the decoding center, probably blocks exit of the E-site tRNA. The polypeptide is Small ribosomal subunit protein uS7 (Staphylococcus aureus (strain USA300)).